Here is an 801-residue protein sequence, read N- to C-terminus: Probable phosphoketolase (801 aa).

The protein belongs to the XFP family. Requires thiamine diphosphate as cofactor.

In Bradyrhizobium diazoefficiens (strain JCM 10833 / BCRC 13528 / IAM 13628 / NBRC 14792 / USDA 110), this protein is Probable phosphoketolase.